The sequence spans 85 residues: MKIIIFLIVCSFVLIGVKADNGYLLNKYTGCKIWCVINNESCNSECKLRRGNYGYCYFWKLACYCEGAPKSELWAYETNKCNGKM.

An N-terminal signal peptide occupies residues methionine 1 to alanine 19. The region spanning aspartate 20–asparagine 82 is the LCN-type CS-alpha/beta domain. Intrachain disulfides connect cysteine 31-cysteine 81, cysteine 35-cysteine 56, cysteine 42-cysteine 63, and cysteine 46-cysteine 65.

This sequence belongs to the long (4 C-C) scorpion toxin superfamily. Sodium channel inhibitor family. In terms of processing, a possible sulfoxide Met-85 on BmP09 could explain the difference of function between BmK AS-1 and BmP09. Expressed by the venom gland.

Its subcellular location is the secreted. In terms of biological role, beta toxins bind voltage-independently at site-4 of sodium channels (Nav) and shift the voltage of activation toward more negative potentials thereby affecting sodium channel activation and promoting spontaneous and repetitive firing. BmKAs1 also significantly stimulates the binding of [3H]-ryanodine to ryanodine receptors on the sarcoplasmic reticulum of the skeletal muscle. It also displays antinociceptive effect in rat models. Its function is as follows. Toxin BmP09 (which may be post-translationally modified) specifically and reversibly blocks large conductance calcium-dependent and voltage-dependent potassium channels (BK) but has no effect on sodium channels. In Olivierus martensii (Manchurian scorpion), this protein is Beta-toxin BmKAs1.